The chain runs to 205 residues: Mitochondrial ATP-independent inner membrane protease subunit 2 (205 aa).

Catalysis depends on residues Glu59 and Arg104.

This sequence belongs to the peptidase S26 family. IMP1 subfamily. Heterodimer of 2 subunits, IMP1A/B and IMP12.

The protein localises to the mitochondrion inner membrane. Its function is as follows. Catalyzes the removal of transit peptides required for the targeting of proteins from the mitochondrial matrix, across the inner membrane, into the inter-membrane space. This Arabidopsis thaliana (Mouse-ear cress) protein is Mitochondrial ATP-independent inner membrane protease subunit 2.